We begin with the raw amino-acid sequence, 478 residues long: Catalase easC (478 aa).

The active site involves H54. Position 343 (Y343) interacts with heme. Positions 459 to 478 are disordered; sequence VAEKARPDSPSRAQPGQLRL.

Belongs to the catalase family. The cofactor is heme.

The protein operates within alkaloid biosynthesis; ergot alkaloid biosynthesis. Its function is as follows. Catalase; part of the gene cluster that mediates the biosynthesis of fungal ergot alkaloid. DmaW catalyzes the first step of ergot alkaloid biosynthesis by condensing dimethylallyl diphosphate (DMAP) and tryptophan to form 4-dimethylallyl-L-tryptophan. The second step is catalyzed by the methyltransferase easF that methylates 4-dimethylallyl-L-tryptophan in the presence of S-adenosyl-L-methionine, resulting in the formation of 4-dimethylallyl-L-abrine. The catalase easC and the FAD-dependent oxidoreductase easE then transform 4-dimethylallyl-L-abrine to chanoclavine-I which is further oxidized by easD in the presence of NAD(+), resulting in the formation of chanoclavine-I aldehyde. Chanoclavine-I aldehyde is the precursor of ergoamides and ergopeptines in Clavicipitaceae, and clavine-type alcaloids such as fumiclavine in Trichocomaceae. However, the metabolites downstream of chanoclavine-I aldehyde in Arthrodermataceae have not been identified yet. The polypeptide is Catalase easC (Trichophyton verrucosum (strain HKI 0517)).